A 111-amino-acid chain; its full sequence is Probable 4-amino-4-deoxy-L-arabinose-phosphoundecaprenol flippase subunit ArnE (111 aa).

Topologically, residues 1–35 (MIWLTLVFASLLSVAGQLCQKQATCFAAVNKRRKH) are cytoplasmic. A helical membrane pass occupies residues 36-56 (IVLWLGLALACLGLAMVLWLL). In terms of domain architecture, EamA spans 40-109 (LGLALACLGL…IIGGIVILGS (70 aa)). The Periplasmic portion of the chain corresponds to 57–60 (VLQN). A helical transmembrane segment spans residues 61–81 (VPVGIAYPMLSLNFVWVTLAA). Residues 82-87 (VKLWHE) are Cytoplasmic-facing. A helical membrane pass occupies residues 88–108 (PVSLRHWCGVAFIIGGIVILG). Residues 109 to 111 (STV) lie on the Periplasmic side of the membrane.

It belongs to the ArnE family. In terms of assembly, heterodimer of ArnE and ArnF.

It localises to the cell inner membrane. It participates in bacterial outer membrane biogenesis; lipopolysaccharide biosynthesis. Its function is as follows. Translocates 4-amino-4-deoxy-L-arabinose-phosphoundecaprenol (alpha-L-Ara4N-phosphoundecaprenol) from the cytoplasmic to the periplasmic side of the inner membrane. The chain is Probable 4-amino-4-deoxy-L-arabinose-phosphoundecaprenol flippase subunit ArnE from Escherichia coli (strain UTI89 / UPEC).